The chain runs to 410 residues: Aspartic proteinase Asp1 (410 aa).

Positions M1–A23 are cleaved as a signal peptide. A propeptide spans V24 to D46 (removed in mature form). The Peptidase A1 domain occupies F38–V392. Residues D56 and D257 contribute to the active site.

This sequence belongs to the peptidase A1 family.

The sequence is that of Aspartic proteinase Asp1 (ASP1) from Oryza sativa subsp. japonica (Rice).